The sequence spans 188 residues: Der GTPase-activating protein YihI (188 aa).

Disordered regions lie at residues 1 to 80 and 162 to 188; these read MKQP…VPVP and DEDDVEREEKQEDILQLLKRGNPKDTF. Residues 27-37 are compositionally biased toward basic and acidic residues; the sequence is TRDELDAEARD. Polar residues predominate over residues 47–57; sequence NRSGARTNVEG.

The protein belongs to the YihI family. As to quaternary structure, interacts with Der.

A GTPase-activating protein (GAP) that modifies Der/EngA GTPase function. May play a role in ribosome biogenesis. The protein is Der GTPase-activating protein YihI of Yersinia pseudotuberculosis serotype O:3 (strain YPIII).